The chain runs to 137 residues: SLFAAAGLAAAAPLESRQDTASCPVSTQGDYVWKISEFYGRKPEGTYYNSLGFNIKATNGGTLDFTCSAQADKLEDHKWYSCGENSFMDFSFDSDRSGLLLKQKVSDDITYVATTTLPNYCRAGGNGPKDFVCQGVS.

An N-terminal signal peptide occupies residues 1–11 (SLFAAAGLAAA). The 110-residue stretch at 28 to 137 (QGDYVWKISE…PKDFVCQGVS (110 aa)) folds into the AA1-like domain. 2 cysteine pairs are disulfide-bonded: C67–C82 and C121–C133.

The protein belongs to the ALTA1 family. Homodimer; disulfide-linked.

It is found in the secreted. This is Allergen Ulo b 1 from Alternaria botrytis (Ulocladium botrytis).